Reading from the N-terminus, the 1414-residue chain is Alpha-(1-&gt;3)-arabinofuranosyltransferase (1414 aa).

9 helical membrane passes run Y57–V77, L81–L101, A128–L148, V167–I187, A203–L223, S273–L293, L302–G322, L352–P372, and V389–A409. One can recognise an F5/8 type C domain in the interval Y687 to P845. 4 helical membrane passes run V1253–V1273, A1297–M1317, V1333–L1353, and Y1364–A1384. The disordered stretch occupies residues P1393–G1414. A compositionally biased stretch (basic and acidic residues) spans E1394–H1406.

Its subcellular location is the membrane. It catalyses the reaction Adds an alpha-D-arabinofuranosyl group from trans,octacis-decaprenylphospho-beta-D-arabinofuranose at the 3-O-position of an alpha-(1-&gt;5)-arabinofuranan chain attached to a beta-(1-&gt;5)-galactofuranan chain.. Its pathway is cell wall biogenesis; cell wall polysaccharide biosynthesis. In terms of biological role, involved in the biosynthesis of the arabinogalactan (AG) region of the mycolylarabinogalactan-peptidoglycan (mAGP) complex, an essential component of the mycobacterial cell wall. Catalyzes the addition of an arabinofuranosyl (Araf) residue from the sugar donor decaprenyl-phospho-arabinose (DPA) on the C-3 of an alpha-(1-&gt;5)-linked Araf from the arabinan backbone of AG. The sequence is that of Alpha-(1-&gt;3)-arabinofuranosyltransferase (aftD) from Mycolicibacterium smegmatis (strain ATCC 700084 / mc(2)155) (Mycobacterium smegmatis).